The following is a 183-amino-acid chain: Protein Syd (183 aa).

Belongs to the Syd family.

Its subcellular location is the cell inner membrane. Interacts with the SecY protein in vivo. May bind preferentially to an uncomplexed state of SecY, thus functioning either as a chelating agent for excess SecY in the cell or as a regulatory factor that negatively controls the translocase function. In Aliivibrio fischeri (strain MJ11) (Vibrio fischeri), this protein is Protein Syd.